The sequence spans 159 residues: Early E3 18.5 kDa glycoprotein (159 aa).

Residues Met-1–Ala-17 form the signal peptide. Topologically, residues Ala-18–Gly-123 are lumenal. Disulfide bonds link Cys-28-Cys-45 and Cys-39-Cys-100. Asn-29 and Asn-78 each carry an N-linked (GlcNAc...) asparagine; by host glycan. Residues Thr-124–Leu-144 traverse the membrane as a helical segment. The Cytoplasmic portion of the chain corresponds to Lys-145–Pro-159. Residues Lys-156 to Pro-159 carry the Di-lysine motif motif.

The protein belongs to the adenoviridae E19 family. Both disulfide bonds are absolutely critical for the interaction with MHC antigens. Post-translationally, N-glycosylated; high-mannose.

The protein localises to the host endoplasmic reticulum membrane. In terms of biological role, binds and retains class I heavy chains in the endoplasmic reticulum during the early period of virus infection, thereby impairing their transport to the cell surface. Also delays the expression of class I alleles that it cannot affect by direct retention. Binds transporters associated with antigen processing (TAP) and acts as a tapasin inhibitor, preventing class I/TAP association. In consequence, infected cells are masked for immune recognition by cytotoxic T-lymphocytes. This Homo sapiens (Human) protein is Early E3 18.5 kDa glycoprotein.